The chain runs to 341 residues: Anthranilate phosphoribosyltransferase (341 aa).

Residues Gly-82, 85-86, Thr-90, 92-95, 110-118, and Thr-122 each bind 5-phospho-alpha-D-ribose 1-diphosphate; these read GD, NIST, and KHGNRAITS. Position 82 (Gly-82) interacts with anthranilate. Ser-94 is a Mg(2+) binding site. Asn-113 serves as a coordination point for anthranilate. Arg-168 is a binding site for anthranilate. 2 residues coordinate Mg(2+): Asp-226 and Glu-227.

The protein belongs to the anthranilate phosphoribosyltransferase family. In terms of assembly, homodimer. Mg(2+) serves as cofactor.

The enzyme catalyses N-(5-phospho-beta-D-ribosyl)anthranilate + diphosphate = 5-phospho-alpha-D-ribose 1-diphosphate + anthranilate. The protein operates within amino-acid biosynthesis; L-tryptophan biosynthesis; L-tryptophan from chorismate: step 2/5. In terms of biological role, catalyzes the transfer of the phosphoribosyl group of 5-phosphorylribose-1-pyrophosphate (PRPP) to anthranilate to yield N-(5'-phosphoribosyl)-anthranilate (PRA). The sequence is that of Anthranilate phosphoribosyltransferase from Caulobacter vibrioides (strain ATCC 19089 / CIP 103742 / CB 15) (Caulobacter crescentus).